The chain runs to 511 residues: LEM domain-containing protein 2 (511 aa).

At A2 the chain carries N-acetylalanine. In terms of domain architecture, LEM spans 2–42; that stretch reads AGLSDLELRRELQALGFQPGPITDTTRNVYRNKLRRLRGEA. Disordered regions lie at residues 18–110 and 128–206; these read FQPG…SDAS and GLSY…AGRT. The span at 38-80 shows a compositional bias: basic and acidic residues; the sequence is LRGEARLRDDERLREDAGPREDAGPRGPERQREEARLREEAPL. Positions 80 to 112 are interaction with lamin A/C complexes; it reads LRARPAASVLRSEPWPLSPSPPAPSAASDASGP. The segment at 80–141 is required for nuclear retention and interaction with LMNA isoform C; sequence LRARPAASVL…PPHAGPGPLR (62 aa). Composition is skewed to low complexity over residues 81 to 94 and 172 to 183; these read RARPAASVLRSEPW and APPSASARPHSA. Helical transmembrane passes span 221-241 and 385-405; these read LLLWASLGLLLGFLAILWVKM and VTHVLIFFWCLAFLWGLLILL. Residues 403–511 are winged-Helix (WH); the sequence is ILLKYRWRKL…KPSSFSDSER (109 aa). 3 positions are modified to phosphoserine: S505, S507, and S509.

As to quaternary structure, interacts (via N-terminus) with LMNA isoform C (via C-terminus) (in vitro). Interacts (via LEM domain) with BANF1. Interacts (via C-terminus) with CHMP7. Interacts (via N-terminus) with tubulin; the interaction causes microtubule bundling and stabilization (in vitro). Post-translationally, phosphorylated; strongly phosphorylated in mitosis compared to G1/S. As to expression, ubiquitously expressed, including liver, brain, heart, skeletal muscle, lung, testis, spleen, kidney and white adipose tissue.

It is found in the nucleus inner membrane. The protein localises to the nucleus envelope. The protein resides in the cytoplasm. It localises to the cytoskeleton. Its subcellular location is the spindle. Nuclear lamina-associated inner nuclear membrane protein that is involved in nuclear structure organization and maintenance of nuclear envelope (NE) integrity and NE reformation after mitosis. Plays a role as transmembrane adapter for the endosomal sorting complexes required for transport (ESCRT), and is thereby involved in ESCRT-mediated NE reformation. Promotes ESCRT-mediated NE closure by recruiting CHMP7 and downstream ESCRT-III proteins IST1/CHMP8 and CHMP2A to the reforming NE during anaphase. During nuclear reassembly, condenses into a liquid-like coating around microtubule spindles and coassembles with CHMP7 to form a macromolecular O-ring seal at the confluence between membranes, chromatin, and the spindle to facilitate early nuclear sealing. Plays a role in the organization of heterochromatin associated with the NE and in the maintenance of NE organization under mechanical stress. Required for embryonic development and is involved in regulation of several signaling pathways such as MAPK and AKT. Required for myoblast differentiation involving regulation of ERK signaling. Essential for cardiac homeostasis and proper heart function. This Mus musculus (Mouse) protein is LEM domain-containing protein 2 (Lemd2).